A 302-amino-acid chain; its full sequence is Deoxyhypusine hydroxylase (302 aa).

Met-1 bears the N-acetylmethionine mark. HEAT-like PBS-type repeat units lie at residues 54–80, 87–113, 175–201, 206–232, and 239–265; these read LKHE…VLQD, VRHE…YSTD, ERYR…GLQC, FRHE…TLAR, and VRHE…HIED. His-56, His-89, and Glu-90 together coordinate Fe cation. His-208, His-241, and Glu-242 together coordinate Fe cation.

The protein belongs to the deoxyhypusine hydroxylase family. Fe(2+) is required as a cofactor.

The catalysed reaction is [eIF5A protein]-deoxyhypusine + AH2 + O2 = [eIF5A protein]-hypusine + A + H2O. It functions in the pathway protein modification; eIF5A hypusination. Functionally, catalyzes the hydroxylation of the N(6)-(4-aminobutyl)-L-lysine intermediate produced by deoxyhypusine synthase/DHPS on a critical lysine of the eukaryotic translation initiation factor 5A/eIF-5A. This is the second step of the post-translational modification of that lysine into an unusual amino acid residue named hypusine. Hypusination is unique to mature eIF-5A factor and is essential for its function. The chain is Deoxyhypusine hydroxylase from Mus musculus (Mouse).